The chain runs to 1252 residues: Protein ITPRID2 (1252 aa).

The interval 28–70 is disordered; that stretch reads CRSSWQASETEDLSTETTTQDEDEDDEEDLPGTKLPAPAGRGN. The span at 36-57 shows a compositional bias: acidic residues; sequence ETEDLSTETTTQDEDEDDEEDL. Thr85 bears the Phosphothreonine mark. Phosphoserine occurs at positions 90, 109, 207, 268, and 328. Disordered regions lie at residues 306 to 483, 552 to 575, and 595 to 636; these read DKTE…HVPA, HVTP…APLQ, and FPQC…GELP. The span at 357–372 shows a compositional bias: low complexity; that stretch reads TVTEEVSGSSSTVTDS. Composition is skewed to basic and acidic residues over residues 395–407 and 415–428; these read SREA…DPLR and DLGH…HCEL. Residues 429–441 show a composition bias toward low complexity; it reads ESSSELKSAQASS. Position 465 is a phosphoserine (Ser465). A phosphoserine mark is found at Ser643, Ser667, Ser736, Ser738, Ser745, Ser758, and Ser766. Lys807 is covalently cross-linked (Glycyl lysine isopeptide (Lys-Gly) (interchain with G-Cter in SUMO2)). Phosphoserine occurs at positions 866 and 898. Residues 955–1031 are a coiled coil; that stretch reads QELQVVRRSL…LLGLDEQLRA (77 aa). Phosphoserine occurs at positions 1036, 1051, 1056, 1059, and 1114. Disordered regions lie at residues 1095–1131 and 1147–1180; these read GESS…GSKP and ALTP…ASPV. The segment covering 1103 to 1117 has biased composition (low complexity); it reads SQATSESSSVCSSPS. Residue Thr1149 is modified to Phosphothreonine. Positions 1151–1161 are enriched in polar residues; that stretch reads TAPSRTGSVQT. Residue Ser1154 is modified to Phosphoserine. Thr1161 bears the Phosphothreonine mark.

It localises to the cytoplasm. The polypeptide is Protein ITPRID2 (Itprid2) (Mus musculus (Mouse)).